Here is a 186-residue protein sequence, read N- to C-terminus: Signal peptidase I P (186 aa).

Residues 1-15 (MTKEKVFKKKSSILE) are Cytoplasmic-facing. Residues 16–35 (WGKAIVIAVILALLIRNFLF) form a helical membrane-spanning segment. Over 36–186 (EPYVVEGKSM…FPFSNMRKAK (151 aa)) the chain is Extracellular. Catalysis depends on residues Ser-44 and Lys-86.

The protein belongs to the peptidase S26 family.

The protein localises to the cell membrane. The catalysed reaction is Cleavage of hydrophobic, N-terminal signal or leader sequences from secreted and periplasmic proteins.. In Bacillus subtilis subsp. natto, this protein is Signal peptidase I P (sipP).